A 698-amino-acid chain; its full sequence is Probable microcin-H47 secretion/processing ATP-binding protein MchF (698 aa).

A Peptidase C39 domain is found at glutamine 26–valine 145. Residue cysteine 32 is part of the active site. 5 consecutive transmembrane segments (helical) span residues glycine 33–leucine 53, leucine 90–valine 110, threonine 289–tyrosine 311, leucine 315–tyrosine 337, and leucine 397–leucine 417. The region spanning leucine 176 to isoleucine 458 is the ABC transmembrane type-1 domain. The 207-residue stretch at leucine 492–isoleucine 698 folds into the ABC transporter domain. Glycine 526–threonine 533 serves as a coordination point for ATP.

This sequence belongs to the ABC transporter superfamily.

It localises to the cell membrane. Probably involved, in conjunction with MchE, in the secretion of microcin H47. This Escherichia coli protein is Probable microcin-H47 secretion/processing ATP-binding protein MchF (mchF).